The following is an 83-amino-acid chain: Putative defensin-like protein 66 (83 aa).

The first 22 residues, 1–22 (MGSSRLMITFIVVAMLAISSDL), serve as a signal peptide directing secretion. 4 disulfide bridges follow: cysteine 38/cysteine 82, cysteine 42/cysteine 65, cysteine 51/cysteine 80, and cysteine 55/cysteine 81.

It belongs to the DEFL family.

The protein localises to the secreted. In Arabidopsis thaliana (Mouse-ear cress), this protein is Putative defensin-like protein 66.